The primary structure comprises 468 residues: Adenosylhomocysteinase (468 aa).

Substrate contacts are provided by Thr-57, Asp-132, and Glu-194. 195–197 (TTT) serves as a coordination point for NAD(+). Residues Lys-224 and Asp-228 each contribute to the substrate site. NAD(+) is bound by residues Asn-229, 258–263 (GFGDVG), Glu-281, Asn-316, 337–339 (IGH), and Asn-382.

Belongs to the adenosylhomocysteinase family. NAD(+) serves as cofactor.

The protein resides in the cytoplasm. It carries out the reaction S-adenosyl-L-homocysteine + H2O = L-homocysteine + adenosine. It participates in amino-acid biosynthesis; L-homocysteine biosynthesis; L-homocysteine from S-adenosyl-L-homocysteine: step 1/1. In terms of biological role, may play a key role in the regulation of the intracellular concentration of adenosylhomocysteine. The polypeptide is Adenosylhomocysteinase (Methylobacterium nodulans (strain LMG 21967 / CNCM I-2342 / ORS 2060)).